Here is a 601-residue protein sequence, read N- to C-terminus: ATP-dependent RNA helicase DeaD (601 aa).

The short motif at 6-34 is the Q motif element; it reads STFSFLGLNPFIIKSLSKMGYVKPSPIQA. A Helicase ATP-binding domain is found at 37-208; that stretch reads IPLLLEGRDV…KRFMKNPQEI (172 aa). 50-57 provides a ligand contact to ATP; the sequence is AQTGSGKT. A DEAD box motif is present at residues 156-159; that stretch reads DEAD. Residues 231–378 form the Helicase C-terminal domain; that stretch reads KTDALIRFLE…EVQLPKIEVL (148 aa). Residues 564–581 show a composition bias toward basic and acidic residues; that stretch reads SIFNKDKNNKRRFSDNRL. The tract at residues 564–601 is disordered; it reads SIFNKDKNNKRRFSDNRLNKSSSIKNETKSSFFRRKSV. Over residues 582 to 594 the composition is skewed to polar residues; sequence NKSSSIKNETKSS.

Belongs to the DEAD box helicase family. DeaD/CsdA subfamily.

It is found in the cytoplasm. It catalyses the reaction ATP + H2O = ADP + phosphate + H(+). Functionally, DEAD-box RNA helicase involved in various cellular processes at low temperature, including ribosome biogenesis, mRNA degradation and translation initiation. The polypeptide is ATP-dependent RNA helicase DeaD (Buchnera aphidicola subsp. Schizaphis graminum (strain Sg)).